Consider the following 470-residue polypeptide: ATP synthase subunit beta (470 aa).

155–162 (GGAGVGKT) contacts ATP.

The protein belongs to the ATPase alpha/beta chains family. As to quaternary structure, F-type ATPases have 2 components, CF(1) - the catalytic core - and CF(0) - the membrane proton channel. CF(1) has five subunits: alpha(3), beta(3), gamma(1), delta(1), epsilon(1). CF(0) has three main subunits: a(1), b(2) and c(9-12). The alpha and beta chains form an alternating ring which encloses part of the gamma chain. CF(1) is attached to CF(0) by a central stalk formed by the gamma and epsilon chains, while a peripheral stalk is formed by the delta and b chains.

Its subcellular location is the cell membrane. It carries out the reaction ATP + H2O + 4 H(+)(in) = ADP + phosphate + 5 H(+)(out). Its function is as follows. Produces ATP from ADP in the presence of a proton gradient across the membrane. The catalytic sites are hosted primarily by the beta subunits. The chain is ATP synthase subunit beta from Pectinatus frisingensis.